The sequence spans 173 residues: Photosystem I assembly protein Ycf3 (173 aa).

TPR repeat units follow at residues 36 to 69 (AFAYYRDGMAAQSEGEYAEALENYREALALEQGE), 73 to 106 (SYILYNMGLIYQSNGELDKALEYYHQALELNPRL), and 121 to 154 (GELSLQAGDEETAEALFNEAAQYWIRAIRIAPNN).

Belongs to the Ycf3 family.

It is found in the cellular thylakoid membrane. Functionally, essential for the assembly of the photosystem I (PSI) complex. May act as a chaperone-like factor to guide the assembly of the PSI subunits. This Synechococcus sp. (strain JA-2-3B'a(2-13)) (Cyanobacteria bacterium Yellowstone B-Prime) protein is Photosystem I assembly protein Ycf3.